The following is a 427-amino-acid chain: Trigger factor (427 aa).

In terms of domain architecture, PPIase FKBP-type spans 163-248 (GDTVVIDFVG…VNEVKAKELP (86 aa)).

This sequence belongs to the FKBP-type PPIase family. Tig subfamily.

It is found in the cytoplasm. The catalysed reaction is [protein]-peptidylproline (omega=180) = [protein]-peptidylproline (omega=0). Functionally, involved in protein export. Acts as a chaperone by maintaining the newly synthesized protein in an open conformation. Functions as a peptidyl-prolyl cis-trans isomerase. The chain is Trigger factor (tig) from Lactococcus lactis subsp. lactis (strain IL1403) (Streptococcus lactis).